The sequence spans 151 residues: uncharacterized protein (151 aa).

4 helical membrane passes run 8–28, 60–80, 82–102, and 113–133; these read GIGS…EFFE, WHVA…GVLT, FSAL…HADS, and LPLI…GKLS.

This sequence belongs to the DoxX family.

It localises to the cell membrane. This is an uncharacterized protein from Haemophilus influenzae (strain ATCC 51907 / DSM 11121 / KW20 / Rd).